The following is a 243-amino-acid chain: Ribonuclease PH (243 aa).

Phosphate is bound by residues Arg-91 and 129 to 131 (GTR).

Belongs to the RNase PH family. Homohexameric ring arranged as a trimer of dimers.

The enzyme catalyses tRNA(n+1) + phosphate = tRNA(n) + a ribonucleoside 5'-diphosphate. Its function is as follows. Phosphorolytic 3'-5' exoribonuclease that plays an important role in tRNA 3'-end maturation. Removes nucleotide residues following the 3'-CCA terminus of tRNAs; can also add nucleotides to the ends of RNA molecules by using nucleoside diphosphates as substrates, but this may not be physiologically important. Probably plays a role in initiation of 16S rRNA degradation (leading to ribosome degradation) during starvation. This is Ribonuclease PH from Burkholderia pseudomallei (strain 668).